Here is a 602-residue protein sequence, read N- to C-terminus: Elongation factor 4 (602 aa).

The tr-type G domain occupies 7–189; the sequence is KFIRNFSIIA…QLVVAIPPPV (183 aa). GTP is bound by residues 19 to 24 and 136 to 139; these read DHGKST and NKID.

Belongs to the TRAFAC class translation factor GTPase superfamily. Classic translation factor GTPase family. LepA subfamily.

It localises to the cell inner membrane. It carries out the reaction GTP + H2O = GDP + phosphate + H(+). Functionally, required for accurate and efficient protein synthesis under certain stress conditions. May act as a fidelity factor of the translation reaction, by catalyzing a one-codon backward translocation of tRNAs on improperly translocated ribosomes. Back-translocation proceeds from a post-translocation (POST) complex to a pre-translocation (PRE) complex, thus giving elongation factor G a second chance to translocate the tRNAs correctly. Binds to ribosomes in a GTP-dependent manner. In Coxiella burnetii (strain Dugway 5J108-111), this protein is Elongation factor 4.